The sequence spans 377 residues: Succinyl-diaminopimelate desuccinylase (377 aa).

Histidine 68 lines the Zn(2+) pocket. Aspartate 70 is an active-site residue. Aspartate 101 provides a ligand contact to Zn(2+). Glutamate 135 serves as the catalytic Proton acceptor. Zn(2+)-binding residues include glutamate 136, glutamate 164, and histidine 350.

Belongs to the peptidase M20A family. DapE subfamily. Homodimer. Requires Zn(2+) as cofactor. Co(2+) is required as a cofactor.

It catalyses the reaction N-succinyl-(2S,6S)-2,6-diaminopimelate + H2O = (2S,6S)-2,6-diaminopimelate + succinate. Its pathway is amino-acid biosynthesis; L-lysine biosynthesis via DAP pathway; LL-2,6-diaminopimelate from (S)-tetrahydrodipicolinate (succinylase route): step 3/3. Its function is as follows. Catalyzes the hydrolysis of N-succinyl-L,L-diaminopimelic acid (SDAP), forming succinate and LL-2,6-diaminopimelate (DAP), an intermediate involved in the bacterial biosynthesis of lysine and meso-diaminopimelic acid, an essential component of bacterial cell walls. The sequence is that of Succinyl-diaminopimelate desuccinylase from Acinetobacter baumannii (strain SDF).